A 389-amino-acid polypeptide reads, in one-letter code: Agamous-like MADS-box protein AGL65 (389 aa).

In terms of domain architecture, MADS-box spans 1–61 (MGRVKLKIKR…GRATAFHGEH (61 aa)). Coiled-coil stretches lie at residues 77–131 (QERT…LMEC) and 293–325 (GMEE…QQQD). The disordered stretch occupies residues 310–343 (NLQQQQQQQQQQQQQDPSMYDPMANNNGGCFQIP). Over residues 312-324 (QQQQQQQQQQQQQ) the composition is skewed to low complexity.

Forms a heterodimer with AGL104. As to expression, expressed in pollen.

It is found in the nucleus. Its function is as follows. Probable transcription factor that forms a heterodimer with the MADS-box protein AGL104 and is involved in the regulation of pollen maturation at the late stages of pollen development and pollen tube growth. This is Agamous-like MADS-box protein AGL65 from Arabidopsis thaliana (Mouse-ear cress).